We begin with the raw amino-acid sequence, 381 residues long: Trans-enoyl reductase iliB (381 aa).

50–53 contributes to the NADP(+) binding site; it reads VDGK. Residue 145–152 participates in substrate binding; the sequence is ATLATVGL. NADP(+)-binding positions include 213–216, Tyr-231, and 278–279; these read SPGS and LD. 298 to 302 provides a ligand contact to substrate; the sequence is TYTQF. Position 367–368 (367–368) interacts with NADP(+); it reads IS.

Belongs to the zinc-containing alcohol dehydrogenase family. As to quaternary structure, monomer.

The catalysed reaction is N-[(4E,6E,10S,12Z,14E)-6,10-dimethyl-3-oxohexadeca-4,6,12,14-tetraenoyl]-L-tyrosyl-[ACP] = (3E,5S)-3-[(2E,4E,8S,10E,12Z)-1-hydroxy-4,8-dimethyltetradeca-2,4,10,12-tetraen-1-ylidene]-5-[(4-hydroxyphenyl)methyl]pyrrolidine-2,4-dione + holo-[ACP] + H(+). It participates in mycotoxin biosynthesis. Its function is as follows. Trans-enoyl reductase; part of the gene cluster that mediates the biosynthesis of ilicicolin H, a 4-hydroxy-2-pyridonealkaloid that has potent and broad antifungal activities by inhibiting the mitochondrial respiration chain. IliB collaborates with the hybrid PKS-NRPS synthetase iliA to assemble the backbone of ilicicolin H. The PKS portion of iliA and trans-acting enoyl reductase iliB work together to construct an octaketide, and two methyl groups are introduced by the MT domain of iliA during the chain assembly. The nascent chain is then condensed with tyrosine, catalyzed by the iliA C domain, and the resulting PKS-NRPS hybrid is offloaded by the iliA RED domain to form an advanced tetramic acid intermediate. The biosynthesis of ilicicolin H starts with formation of the tetramic acid by the hybrid PKS-NRPS synthetase iliA with the partnering trans-enoyl reductase iliB since iliA lacks a designated enoylreductase (ER) domain. The cytochrome P450 monooxygenase iliC then catalyzes the ring expansion of the tetramate to the acyclic 2-pyridone. The pericyclase iliD further converts the acyclic 2-pyridone into 8-epi-ilicicolin H. 8-epi-ilicicolin H might then spontaneously convert to ilicicolin H since ilicicolin H is produced in the absence of the epimerase iliE, in contrast to what was observed for the Talaromyces variabilis ilicolin H biosynthetic pathway. This Neonectria sp. (strain DH2) protein is Trans-enoyl reductase iliB.